We begin with the raw amino-acid sequence, 219 residues long: Thiamine-phosphate synthase (219 aa).

4-amino-2-methyl-5-(diphosphooxymethyl)pyrimidine contacts are provided by residues 44–48 (QFREK) and asparagine 79. Residues aspartate 80 and aspartate 99 each contribute to the Mg(2+) site. A 4-amino-2-methyl-5-(diphosphooxymethyl)pyrimidine-binding site is contributed by serine 117. 143–145 (TST) is a binding site for 2-[(2R,5Z)-2-carboxy-4-methylthiazol-5(2H)-ylidene]ethyl phosphate. Residue lysine 146 coordinates 4-amino-2-methyl-5-(diphosphooxymethyl)pyrimidine. 2-[(2R,5Z)-2-carboxy-4-methylthiazol-5(2H)-ylidene]ethyl phosphate-binding positions include glycine 175 and 195–196 (IS).

Belongs to the thiamine-phosphate synthase family. Mg(2+) serves as cofactor.

It carries out the reaction 2-[(2R,5Z)-2-carboxy-4-methylthiazol-5(2H)-ylidene]ethyl phosphate + 4-amino-2-methyl-5-(diphosphooxymethyl)pyrimidine + 2 H(+) = thiamine phosphate + CO2 + diphosphate. The catalysed reaction is 2-(2-carboxy-4-methylthiazol-5-yl)ethyl phosphate + 4-amino-2-methyl-5-(diphosphooxymethyl)pyrimidine + 2 H(+) = thiamine phosphate + CO2 + diphosphate. The enzyme catalyses 4-methyl-5-(2-phosphooxyethyl)-thiazole + 4-amino-2-methyl-5-(diphosphooxymethyl)pyrimidine + H(+) = thiamine phosphate + diphosphate. It functions in the pathway cofactor biosynthesis; thiamine diphosphate biosynthesis; thiamine phosphate from 4-amino-2-methyl-5-diphosphomethylpyrimidine and 4-methyl-5-(2-phosphoethyl)-thiazole: step 1/1. Functionally, condenses 4-methyl-5-(beta-hydroxyethyl)thiazole monophosphate (THZ-P) and 2-methyl-4-amino-5-hydroxymethyl pyrimidine pyrophosphate (HMP-PP) to form thiamine monophosphate (TMP). This chain is Thiamine-phosphate synthase, found in Bacillus thuringiensis (strain Al Hakam).